A 292-amino-acid chain; its full sequence is RNA polymerase II transcriptional coactivator SUB1 (292 aa).

2 disordered regions span residues 1-31 (MSYY…GGMP) and 117-292 (LLSD…SEEE). A compositionally biased stretch (low complexity) spans 20-31 (LSNSNNNNGGMP). The residue at position 119 (Ser119) is a Phosphoserine. Composition is skewed to basic and acidic residues over residues 133 to 166 (NNDK…LEPR), 179 to 191 (PHEE…EREA), 204 to 240 (KQQE…KIAE), and 251 to 267 (AKKE…KDAN). Residues Ser268, Ser269, and Ser289 each carry the phosphoserine modification.

It belongs to the transcriptional coactivator PC4 family.

Its subcellular location is the nucleus. Functionally, plays a role in the release of TFIIB from the transcription complex during transcription initiation. Binds to TFIIB and specifically inhibits the formation of the TBP-TFIIB-promoter complexes. This is RNA polymerase II transcriptional coactivator SUB1 (SUB1) from Saccharomyces cerevisiae (strain ATCC 204508 / S288c) (Baker's yeast).